We begin with the raw amino-acid sequence, 421 residues long: UDP-N-acetylglucosamine 1-carboxyvinyltransferase (421 aa).

24 to 25 provides a ligand contact to phosphoenolpyruvate; it reads KN. R93 provides a ligand contact to UDP-N-acetyl-alpha-D-glucosamine. The active-site Proton donor is the C117. Residue C117 is modified to 2-(S-cysteinyl)pyruvic acid O-phosphothioketal. UDP-N-acetyl-alpha-D-glucosamine is bound by residues D307 and I329.

Belongs to the EPSP synthase family. MurA subfamily.

It localises to the cytoplasm. The enzyme catalyses phosphoenolpyruvate + UDP-N-acetyl-alpha-D-glucosamine = UDP-N-acetyl-3-O-(1-carboxyvinyl)-alpha-D-glucosamine + phosphate. It functions in the pathway cell wall biogenesis; peptidoglycan biosynthesis. In terms of biological role, cell wall formation. Adds enolpyruvyl to UDP-N-acetylglucosamine. The polypeptide is UDP-N-acetylglucosamine 1-carboxyvinyltransferase (Blochmanniella pennsylvanica (strain BPEN)).